The primary structure comprises 604 residues: MADSKGSTSKEGLSDWCILEAECSDLENDFEQLFEQDTDSDVSDLLDNGELEQGNSLELFHQQECEQSEEQLQILKRKYLSPKAVAQLSPRLESISLSPQQKSKRRLFAEQDSGLELSLNNEAEDVSPEVEVPAIDSRPVDEGGSGAIDIDYLSLLRSSNIKATLMAKFKESFGVGFNELTRQFKSYKTCCNDWVLAVYAVHDDLFESSKQLLQQHCDYIWVRGIGAMTLYLLCFKAGKNRGTVHKLMTSMLNVQEQQILSEPPKLRNTAAALFWYKGGMGSGAFTHGTYPDWIAHQTILGHQNAEASTFDFSAMVQWAFDNNYLEEPDIAYQYAKLAPEDSNAVAWLAHNQQAKFVRECAAMVRFYKKGQMKEMSMSEWIHTKINEVEGEGHWSDIVKFLRYQDVNFITFLAAFKNFLHAVPKHNCILIYGPPNSGKSSFAMSLIKVLKGRVLSFVNSKSQFWLQPLGESKIALLDDVTDPCWVYIDTYLRNGLDGHFVSLDCKYKAPVQIKFPPLLLTSNINVHGETNYRYLHSRIKGFEFPHPFPMKPDNTPQFQLTDQSWKSFFERLWTQLDLSDQEEEGQHGESQRAFQCSARSANEHI.

Residues 76 to 78 (KRK) carry the Nuclear localization signal motif. Ser81 and Ser89 each carry phosphoserine; by host. The Nuclear export signal motif lies at 88–97 (LSPRLESISL). Residues 144-307 (GSGAIDIDYL…TILGHQNAEA (164 aa)) form a DNA-binding region region. Positions 406 to 556 (VNFITFLAAF…FPMKPDNTPQ (151 aa)) constitute an SF3 helicase domain. 432–439 (GPPNSGKS) is an ATP binding site. A Glycyl lysine isopeptide (Lys-Gly) (interchain with G-Cter in SUMO) cross-link involves residue Lys513. A disordered region spans residues 579 to 604 (DQEEEGQHGESQRAFQCSARSANEHI). Residues 591–604 (RAFQCSARSANEHI) are compositionally biased toward polar residues.

Belongs to the papillomaviridae E1 protein family. As to quaternary structure, can form hexamers. Interacts with E2 protein; this interaction increases E1 DNA binding specificity. Interacts with host DNA polymerase subunit POLA2. Interacts with host single stranded DNA-binding protein RPA1. Interacts with host TOP1; this interaction stimulates the enzymatic activity of TOP1. In terms of processing, phosphorylated. Sumoylated.

It localises to the host nucleus. It catalyses the reaction Couples ATP hydrolysis with the unwinding of duplex DNA by translocating in the 3'-5' direction.. The catalysed reaction is ATP + H2O = ADP + phosphate + H(+). In terms of biological role, ATP-dependent DNA 3'-5' helicase required for initiation of viral DNA replication. It forms a complex with the viral E2 protein. The E1-E2 complex binds to the replication origin which contains binding sites for both proteins. During the initial step, a dimer of E1 interacts with a dimer of protein E2 leading to a complex that binds the viral origin of replication with high specificity. Then, a second dimer of E1 displaces the E2 dimer in an ATP-dependent manner to form the E1 tetramer. Following this, two E1 monomers are added to each half of the site, which results in the formation of two E1 trimers on the viral ori. Subsequently, two hexamers will be created. The double hexamer acts as a bi-directional helicase machinery and unwinds the viral DNA and then recruits the host DNA polymerase to start replication. The protein is Replication protein E1 of Human papillomavirus 12.